The primary structure comprises 156 residues: ATP synthase subunit b (156 aa).

The chain crosses the membrane as a helical span at residues 11 to 31; sequence LIAFALFVWFCMKFVWPPIIN.

This sequence belongs to the ATPase B chain family. In terms of assembly, F-type ATPases have 2 components, F(1) - the catalytic core - and F(0) - the membrane proton channel. F(1) has five subunits: alpha(3), beta(3), gamma(1), delta(1), epsilon(1). F(0) has three main subunits: a(1), b(2) and c(10-14). The alpha and beta chains form an alternating ring which encloses part of the gamma chain. F(1) is attached to F(0) by a central stalk formed by the gamma and epsilon chains, while a peripheral stalk is formed by the delta and b chains.

The protein resides in the cell inner membrane. Functionally, f(1)F(0) ATP synthase produces ATP from ADP in the presence of a proton or sodium gradient. F-type ATPases consist of two structural domains, F(1) containing the extramembraneous catalytic core and F(0) containing the membrane proton channel, linked together by a central stalk and a peripheral stalk. During catalysis, ATP synthesis in the catalytic domain of F(1) is coupled via a rotary mechanism of the central stalk subunits to proton translocation. Its function is as follows. Component of the F(0) channel, it forms part of the peripheral stalk, linking F(1) to F(0). The protein is ATP synthase subunit b of Haemophilus influenzae (strain PittGG).